The sequence spans 370 residues: Protein FAM110B (370 aa).

Disordered stretches follow at residues 127–151 and 237–256; these read SSEG…RSEA and KSPE…RPSL. Phosphoserine is present on residues Ser238 and Ser301. Residues 317–337 form a disordered region; that stretch reads DCEQSQDSNSDLRNDDSANDR. Positions 326 to 335 are enriched in basic and acidic residues; it reads SDLRNDDSAN.

The protein belongs to the FAM110 family. As to expression, detected in thyroid, spleen and testis, and at lower levels in stomach, spinal cord, lymph node, trachea, adrenal gland, prostate, ovary and intestine.

The protein localises to the cytoplasm. It is found in the cytoskeleton. It localises to the microtubule organizing center. The protein resides in the centrosome. In terms of biological role, may be involved in tumor progression. This is Protein FAM110B (FAM110B) from Homo sapiens (Human).